An 861-amino-acid chain; its full sequence is E3 ubiquitin-protein ligase HECTD3 (861 aa).

N-acetylalanine is present on Ala2. Phosphoserine is present on Ser12. The 179-residue stretch at 219 to 397 folds into the DOC domain; the sequence is DEDLIHFLYD…ASLVRYPRLE (179 aa). The HECT domain maps to 512–857; that stretch reads YEKPLDYRWP…NCVAIDTDMS (346 aa). Residue Cys823 is the Glycyl thioester intermediate of the active site.

In terms of assembly, interacts with TRIOBP. Interacts with STX8.

The protein localises to the cytoplasm. The protein resides in the perinuclear region. It catalyses the reaction S-ubiquitinyl-[E2 ubiquitin-conjugating enzyme]-L-cysteine + [acceptor protein]-L-lysine = [E2 ubiquitin-conjugating enzyme]-L-cysteine + N(6)-ubiquitinyl-[acceptor protein]-L-lysine.. The protein operates within protein modification; protein ubiquitination. Functionally, E3 ubiquitin ligases accepts ubiquitin from an E2 ubiquitin-conjugating enzyme in the form of a thioester and then directly transfers the ubiquitin to targeted substrates. Mediates ubiquitination of TRIOBP and its subsequent proteasomal degradation, thus facilitating cell cycle progression by regulating the turn-over of TRIOBP. Also mediates ubiquitination of STX8. This is E3 ubiquitin-protein ligase HECTD3 (Hectd3) from Mus musculus (Mouse).